Here is a 246-residue protein sequence, read N- to C-terminus: Probable transcriptional regulatory protein ACP_0521 (246 aa).

It belongs to the TACO1 family.

Its subcellular location is the cytoplasm. This Acidobacterium capsulatum (strain ATCC 51196 / DSM 11244 / BCRC 80197 / JCM 7670 / NBRC 15755 / NCIMB 13165 / 161) protein is Probable transcriptional regulatory protein ACP_0521.